We begin with the raw amino-acid sequence, 601 residues long: MDVHDLSEEAKRGVIHTSEESLDDLCVDFRGRPCRPSKHGGTRAALFVLGFQAFEMMAIAAVGNNLITYVFNEMHFPLSKSANLVTNFIGTVFLLSLLGGFLSDSYLGSFRTMLVFGVIEISGFILLSVQAHLPELRPPECNMKSTTIHCVEANGYKAATLYTALCLVALGSGCLKPNIISHGANQFQRKDLRKLSSFFNAAYFAFSMGQLIALTLLVWVQTHSGMDVGFGVSAAVMAAGMISLVAGTSFYRNKPPSGSIFTPIAQVFVAAITKRKQICPSNPNMVHQPSTDLVRVKPLLHSNKFRFLDKACIKTQGKAMESPWRLCTIEQVHQVKILLSVIPIFACTIIFNTILAQLQTFSVQQGSSMNTHITKTFQIPPASLQAIPYIILIFFVPLYETFFVPLARKLTGNDSGISPLQRIGTGLFLATFSMVAAALVEKKRRESFLEQNVMLSIFWIAPQFLIFGLSEMFTAVGLVEFFYKQSSQSMQSFLTAMTYCSYSFGFYLSSVLVSTVNRVTSSNGSGTKEGWLGDNDLNKDRLDHFYWLLASLSFINFFNYLFWSRWYSCDPSATHHSAEVNSLEALENGEIKDSTTEKPRI.

Helical transmembrane passes span 44-64 (AALF…AVGN) and 82-102 (ANLV…GGFL). A Phosphothreonine modification is found at Thr-112. 10 helical membrane passes run 113-133 (MLVF…QAHL), 160-180 (TLYT…PNII), 198-218 (FFNA…TLLV), 228-248 (VGFG…VAGT), 337-357 (ILLS…ILAQ), 386-406 (AIPY…FVPL), 420-440 (LQRI…AALV), 453-473 (VMLS…SEMF), 493-513 (FLTA…SVLV), and 544-564 (HFYW…LFWS).

This sequence belongs to the major facilitator superfamily. Proton-dependent oligopeptide transporter (POT/PTR) (TC 2.A.17) family. As to expression, expressed in shoots, roots and stems.

It is found in the membrane. This Arabidopsis thaliana (Mouse-ear cress) protein is Protein NRT1/ PTR FAMILY 4.4 (NPF4.4).